The sequence spans 30 residues: Cycloviolacin-H4 (30 aa).

The segment at residues 1-30 (GIPCAESCVWIPCTVTALLGCSCSNNVCYN) is a cross-link (cyclopeptide (Gly-Asn)). Cystine bridges form between cysteine 4–cysteine 21, cysteine 8–cysteine 23, and cysteine 13–cysteine 28.

Post-translationally, this is a cyclic peptide.

Probably participates in a plant defense mechanism. Has potent hemolytic activity. This is Cycloviolacin-H4 from Viola hederacea (Australian violet).